The sequence spans 152 residues: MFRGASAINMDAKGRIAIPARYRDALRVEHAGTVIMTVDIDAACLLIYPLHEWEQIEAKLKLLSDTDPLERSFKRKLLGHAQDCELDSHGRIVIPPALRSFASLEKKTMLVGLLNKFELWEESAWQQQMDDGNALIQSQDLASNERLAHFSL.

2 consecutive SpoVT-AbrB domains span residues A5–E52 and A81–A124.

Belongs to the MraZ family. Forms oligomers.

It localises to the cytoplasm. Its subcellular location is the nucleoid. The sequence is that of Transcriptional regulator MraZ from Shewanella frigidimarina (strain NCIMB 400).